The following is a 93-amino-acid chain: Large ribosomal subunit protein mL41 (93 aa).

The transit peptide at 1-13 (MHQSLLCFGARRL) directs the protein to the mitochondrion.

Belongs to the mitochondrion-specific ribosomal protein mL41 family. As to quaternary structure, component of the mitochondrial large ribosomal subunit (mt-LSU). Mature yeast 74S mitochondrial ribosomes consist of a small (37S) and a large (54S) subunit. The 37S small subunit contains a 15S ribosomal RNA (15S mt-rRNA) and at least 32 different proteins. The 54S large subunit contains a 21S rRNA (21S mt-rRNA) and at least 45 different proteins.

The protein localises to the mitochondrion. In terms of biological role, component of the mitochondrial ribosome (mitoribosome), a dedicated translation machinery responsible for the synthesis of mitochondrial genome-encoded proteins, including at least some of the essential transmembrane subunits of the mitochondrial respiratory chain. The mitoribosomes are attached to the mitochondrial inner membrane and translation products are cotranslationally integrated into the membrane. The polypeptide is Large ribosomal subunit protein mL41 (mrpl27) (Schizosaccharomyces pombe (strain 972 / ATCC 24843) (Fission yeast)).